Reading from the N-terminus, the 691-residue chain is Kinetochore protein NDC80 (691 aa).

The tract at residues 1-95 is disordered; sequence MQSSTSTDQH…LNDKSNSRNS (95 aa). Residues 10-19 are compositionally biased toward basic and acidic residues; the sequence is HVLHHMDPHR. Positions 20 to 42 are enriched in polar residues; that stretch reads FTSQIPTATSSQLRRRNSTNQGL. At Thr38 the chain carries Phosphothreonine. The segment covering 54 to 65 has biased composition (low complexity); that stretch reads TISGTGIPTGGI. Thr248 carries the post-translational modification Phosphothreonine. Coiled coils occupy residues 376-446 and 522-686; these read GKLE…SIKS and KKSI…FETE.

This sequence belongs to the NDC80/HEC1 family. As to quaternary structure, component of the NDC80 complex, which consists of NDC80, NUF2, SPC24 and SPC25. The NDC80 complex is formed by two subcomplexes, NDC80-NUF2 and SPC24-SPC25, which are joined end-to-end through their coiled-coil domains. It has a rod-like structure with a length of 570 Angstroms and globular domains at either end. The NDC80-NUF2 globular domains are probably directed to microtubules, the SPC24-SPC25 globular domains to the centromere. NDC80 probably interacts with SMC1 and SMC2. Also interacts with KIN3. Interacts with DMC1.

It localises to the nucleus. Its subcellular location is the chromosome. The protein resides in the centromere. It is found in the kinetochore. Acts as a component of the essential kinetochore-associated NDC80 complex, which is involved in chromosome segregation and spindle checkpoint activity. In Saccharomyces cerevisiae (strain ATCC 204508 / S288c) (Baker's yeast), this protein is Kinetochore protein NDC80.